The following is a 234-amino-acid chain: Orotate phosphoribosyltransferase (234 aa).

Lysine 37 provides a ligand contact to 5-phospho-alpha-D-ribose 1-diphosphate. 45 to 46 (FF) provides a ligand contact to orotate. Residues 83-84 (YK), arginine 109, lysine 110, lysine 113, histidine 115, and 134-142 (DDVISAGTS) each bind 5-phospho-alpha-D-ribose 1-diphosphate. 2 residues coordinate orotate: serine 138 and arginine 166.

It belongs to the purine/pyrimidine phosphoribosyltransferase family. PyrE subfamily. In terms of assembly, homodimer. Mg(2+) serves as cofactor.

The enzyme catalyses orotidine 5'-phosphate + diphosphate = orotate + 5-phospho-alpha-D-ribose 1-diphosphate. Its pathway is pyrimidine metabolism; UMP biosynthesis via de novo pathway; UMP from orotate: step 1/2. Functionally, catalyzes the transfer of a ribosyl phosphate group from 5-phosphoribose 1-diphosphate to orotate, leading to the formation of orotidine monophosphate (OMP). The protein is Orotate phosphoribosyltransferase of Methylibium petroleiphilum (strain ATCC BAA-1232 / LMG 22953 / PM1).